Here is a 342-residue protein sequence, read N- to C-terminus: Holliday junction branch migration complex subunit RuvB (342 aa).

The interval methionine 1–tyrosine 179 is large ATPase domain (RuvB-L). ATP contacts are provided by residues isoleucine 18, arginine 19, glycine 60, lysine 63, threonine 64, threonine 65, glutamate 126–phenylalanine 128, arginine 169, tyrosine 179, and arginine 216. A Mg(2+)-binding site is contributed by threonine 64. The tract at residues asparagine 180–glutamate 250 is small ATPAse domain (RuvB-S). A head domain (RuvB-H) region spans residues arginine 253–glutamate 342. DNA contacts are provided by arginine 289, arginine 308, and arginine 313.

It belongs to the RuvB family. In terms of assembly, homohexamer. Forms an RuvA(8)-RuvB(12)-Holliday junction (HJ) complex. HJ DNA is sandwiched between 2 RuvA tetramers; dsDNA enters through RuvA and exits via RuvB. An RuvB hexamer assembles on each DNA strand where it exits the tetramer. Each RuvB hexamer is contacted by two RuvA subunits (via domain III) on 2 adjacent RuvB subunits; this complex drives branch migration. In the full resolvosome a probable DNA-RuvA(4)-RuvB(12)-RuvC(2) complex forms which resolves the HJ.

It is found in the cytoplasm. The catalysed reaction is ATP + H2O = ADP + phosphate + H(+). In terms of biological role, the RuvA-RuvB-RuvC complex processes Holliday junction (HJ) DNA during genetic recombination and DNA repair, while the RuvA-RuvB complex plays an important role in the rescue of blocked DNA replication forks via replication fork reversal (RFR). RuvA specifically binds to HJ cruciform DNA, conferring on it an open structure. The RuvB hexamer acts as an ATP-dependent pump, pulling dsDNA into and through the RuvAB complex. RuvB forms 2 homohexamers on either side of HJ DNA bound by 1 or 2 RuvA tetramers; 4 subunits per hexamer contact DNA at a time. Coordinated motions by a converter formed by DNA-disengaged RuvB subunits stimulates ATP hydrolysis and nucleotide exchange. Immobilization of the converter enables RuvB to convert the ATP-contained energy into a lever motion, pulling 2 nucleotides of DNA out of the RuvA tetramer per ATP hydrolyzed, thus driving DNA branch migration. The RuvB motors rotate together with the DNA substrate, which together with the progressing nucleotide cycle form the mechanistic basis for DNA recombination by continuous HJ branch migration. Branch migration allows RuvC to scan DNA until it finds its consensus sequence, where it cleaves and resolves cruciform DNA. This Rickettsia rickettsii (strain Sheila Smith) protein is Holliday junction branch migration complex subunit RuvB.